Reading from the N-terminus, the 152-residue chain is SsrA-binding protein (152 aa).

Residues 130–152 (HDKRQDLKQRQDKREMERAMKQR) form a disordered region. Basic and acidic residues predominate over residues 132 to 152 (KRQDLKQRQDKREMERAMKQR).

The protein belongs to the SmpB family.

The protein resides in the cytoplasm. Functionally, required for rescue of stalled ribosomes mediated by trans-translation. Binds to transfer-messenger RNA (tmRNA), required for stable association of tmRNA with ribosomes. tmRNA and SmpB together mimic tRNA shape, replacing the anticodon stem-loop with SmpB. tmRNA is encoded by the ssrA gene; the 2 termini fold to resemble tRNA(Ala) and it encodes a 'tag peptide', a short internal open reading frame. During trans-translation Ala-aminoacylated tmRNA acts like a tRNA, entering the A-site of stalled ribosomes, displacing the stalled mRNA. The ribosome then switches to translate the ORF on the tmRNA; the nascent peptide is terminated with the 'tag peptide' encoded by the tmRNA and targeted for degradation. The ribosome is freed to recommence translation, which seems to be the essential function of trans-translation. The polypeptide is SsrA-binding protein (Thermosynechococcus vestitus (strain NIES-2133 / IAM M-273 / BP-1)).